The primary structure comprises 340 residues: tRNA N6-adenosine threonylcarbamoyltransferase (340 aa).

Fe cation is bound by residues H111 and H115. Residues 134 to 138 (LVSGG), D167, G180, and N276 each bind substrate. Residue D304 coordinates Fe cation.

The protein belongs to the KAE1 / TsaD family. Fe(2+) serves as cofactor.

It is found in the cytoplasm. The catalysed reaction is L-threonylcarbamoyladenylate + adenosine(37) in tRNA = N(6)-L-threonylcarbamoyladenosine(37) in tRNA + AMP + H(+). In terms of biological role, required for the formation of a threonylcarbamoyl group on adenosine at position 37 (t(6)A37) in tRNAs that read codons beginning with adenine. Is involved in the transfer of the threonylcarbamoyl moiety of threonylcarbamoyl-AMP (TC-AMP) to the N6 group of A37, together with TsaE and TsaB. TsaD likely plays a direct catalytic role in this reaction. This Helicobacter pylori (strain ATCC 700392 / 26695) (Campylobacter pylori) protein is tRNA N6-adenosine threonylcarbamoyltransferase.